Reading from the N-terminus, the 260-residue chain is 5-oxoprolinase subunit A (260 aa).

The protein belongs to the LamB/PxpA family. In terms of assembly, forms a complex composed of PxpA, PxpB and PxpC.

It catalyses the reaction 5-oxo-L-proline + ATP + 2 H2O = L-glutamate + ADP + phosphate + H(+). Functionally, catalyzes the cleavage of 5-oxoproline to form L-glutamate coupled to the hydrolysis of ATP to ADP and inorganic phosphate. This is 5-oxoprolinase subunit A from Methylococcus capsulatus (strain ATCC 33009 / NCIMB 11132 / Bath).